Consider the following 1038-residue polypeptide: Ribosome quality control complex subunit 2 (1038 aa).

Positions 350–383 form a coiled coil; that stretch reads ALRIQNQESQAQKKIDDARAENDRKIQALLDVQE. Disordered stretches follow at residues 459–499, 708–824, and 877–898; these read LNTS…MKRK, KTSG…DEPG, and QRKK…KREK. Residues 713 to 768 adopt a coiled-coil conformation; the sequence is EDNGDDDEEEEEEEEEEEEEEEEEEEEEEEEKEEEEKEEEQQQDEDDSNEVNGLEK. A compositionally biased stretch (acidic residues) spans 714–761; that stretch reads DNGDDDEEEEEEEEEEEEEEEEEEEEEEEEKEEEEKEEEQQQDEDDSN. Positions 780 to 794 are enriched in basic and acidic residues; the sequence is SFEHDNLEKDIEKHC. The segment covering 795–805 has biased composition (polar residues); sequence TISSDTDSDSG. Ser797 carries the post-translational modification Phosphoserine. Residues 830–912 adopt a coiled-coil conformation; it reads IENINSNVRG…QALKFTKKEK (83 aa). Basic and acidic residues predominate over residues 877–894; it reads QRKKEEIMKREVREDRKN.

This sequence belongs to the NEMF family. Component of the ribosome quality control complex (RQC), composed of the E3 ubiquitin ligase RKR1/LTN1, RQC1 and RQC2, as well as CDC48 and its ubiquitin-binding cofactors associated with the 60S ribosomal subunit. RQC2 binds to the 40S-binding surface of tRNAs.

It is found in the cytoplasm. In terms of biological role, key component of the ribosome quality control complex (RQC), a ribosome-associated complex that mediates the extraction of incompletely synthesized nascent chains from stalled ribosomes as well as their ubiquitin-mediated proteasomal degradation. Thereby, frees 60S subunit ribosomes from the stalled translation complex and prevents the accumulation of nascent polypeptide chains that are potentially toxic for the cell. Within the RQC complex, RQC2 specifically binds stalled 60S ribosomal subunits by recognizing an exposed, nascent chain-conjugated tRNA moiety and promotes the recruitment of RKR1/LTN1 to stalled 60S subunits. Following binding to stalled 60S ribosomal subunits, RQC2 mediates CAT tailing by recruiting alanine- and threonine-charged tRNA to the A-site and directing the elongation of stalled nascent chains independently of mRNA or 40S subunits, leading to non-templated C-terminal Ala and Thr extensions (CAT tails). CAT tails promote the RKR1/LTN1-mediated ubiquitination of incompletely synthesized nascent polypeptides: CAT tailing facilitates RKR1/LTN1-dependent ubiquitination by exposing lysine residues that would otherwise remain buried in the ribosomal exit tunnel. Following ubiquitination, incompletely synthesized nascent polypeptides are recognized by CDC48 and degraded by the proteasome. CAT-tailed proteins tend to aggregate and sequester chaperones and can induce proteotoxic stress; their RKR1/LTN1-dependent ubiquitination and degradation is required to prevent proteotoxic stress. The chain is Ribosome quality control complex subunit 2 from Saccharomyces cerevisiae (strain ATCC 204508 / S288c) (Baker's yeast).